The following is a 705-amino-acid chain: Elongation factor G (705 aa).

The tr-type G domain maps to 7 to 287 (HLTRNIGIMA…YVCAFLPSPL (281 aa)). Residues 16–23 (AHIDAGKT), 84–88 (DTPGH), and 138–141 (NKMD) contribute to the GTP site. Positions 293–312 (VGTNPTTGAEEDRKPSEDEK) are disordered. Positions 302–312 (EEDRKPSEDEK) are enriched in basic and acidic residues.

Belongs to the TRAFAC class translation factor GTPase superfamily. Classic translation factor GTPase family. EF-G/EF-2 subfamily.

Its subcellular location is the cytoplasm. Its function is as follows. Catalyzes the GTP-dependent ribosomal translocation step during translation elongation. During this step, the ribosome changes from the pre-translocational (PRE) to the post-translocational (POST) state as the newly formed A-site-bound peptidyl-tRNA and P-site-bound deacylated tRNA move to the P and E sites, respectively. Catalyzes the coordinated movement of the two tRNA molecules, the mRNA and conformational changes in the ribosome. The protein is Elongation factor G of Phocaeicola vulgatus (strain ATCC 8482 / DSM 1447 / JCM 5826 / CCUG 4940 / NBRC 14291 / NCTC 11154) (Bacteroides vulgatus).